Reading from the N-terminus, the 170-residue chain is Probable T4-type lysozyme 1 (170 aa).

The active-site Proton donor is the E13. D22 functions as the Nucleophile in the catalytic mechanism.

Belongs to the glycosyl hydrolase 24 family.

It catalyses the reaction Hydrolysis of (1-&gt;4)-beta-linkages between N-acetylmuramic acid and N-acetyl-D-glucosamine residues in a peptidoglycan and between N-acetyl-D-glucosamine residues in chitodextrins.. The chain is Probable T4-type lysozyme 1 from Dictyostelium discoideum (Social amoeba).